Reading from the N-terminus, the 132-residue chain is NADH-quinone oxidoreductase subunit A (132 aa).

3 helical membrane passes run 7 to 27, 62 to 82, and 91 to 111; these read YWVL…MIGV, FYLI…LYAW, and WTGY…LAYL.

Belongs to the complex I subunit 3 family. In terms of assembly, NDH-1 is composed of 14 different subunits. Subunits NuoA, H, J, K, L, M, N constitute the membrane sector of the complex.

Its subcellular location is the cell inner membrane. It carries out the reaction a quinone + NADH + 5 H(+)(in) = a quinol + NAD(+) + 4 H(+)(out). NDH-1 shuttles electrons from NADH, via FMN and iron-sulfur (Fe-S) centers, to quinones in the respiratory chain. The immediate electron acceptor for the enzyme in this species is believed to be ubiquinone. Couples the redox reaction to proton translocation (for every two electrons transferred, four hydrogen ions are translocated across the cytoplasmic membrane), and thus conserves the redox energy in a proton gradient. The sequence is that of NADH-quinone oxidoreductase subunit A from Acidiphilium cryptum (strain JF-5).